The chain runs to 233 residues: Biosynthetic peptidoglycan transglycosylase (233 aa).

Residues 8–28 form a helical membrane-spanning segment; that stretch reads LIALPVGIFIFFNAYVYGNII.

The protein belongs to the glycosyltransferase 51 family.

It is found in the cell inner membrane. The enzyme catalyses [GlcNAc-(1-&gt;4)-Mur2Ac(oyl-L-Ala-gamma-D-Glu-L-Lys-D-Ala-D-Ala)](n)-di-trans,octa-cis-undecaprenyl diphosphate + beta-D-GlcNAc-(1-&gt;4)-Mur2Ac(oyl-L-Ala-gamma-D-Glu-L-Lys-D-Ala-D-Ala)-di-trans,octa-cis-undecaprenyl diphosphate = [GlcNAc-(1-&gt;4)-Mur2Ac(oyl-L-Ala-gamma-D-Glu-L-Lys-D-Ala-D-Ala)](n+1)-di-trans,octa-cis-undecaprenyl diphosphate + di-trans,octa-cis-undecaprenyl diphosphate + H(+). Its pathway is cell wall biogenesis; peptidoglycan biosynthesis. In terms of biological role, peptidoglycan polymerase that catalyzes glycan chain elongation from lipid-linked precursors. This is Biosynthetic peptidoglycan transglycosylase from Neisseria meningitidis serogroup C (strain 053442).